We begin with the raw amino-acid sequence, 623 residues long: Chaperone protein HtpG (623 aa).

Positions 1–336 (MSMKGQETRG…SNDLPLNVSR (336 aa)) are a; substrate-binding. Residues 337-551 (EILQDSRVTQ…ADEMSTQMAK (215 aa)) are b. Residues 552 to 623 (LFAAAGQEAP…IRRMNKLLSA (72 aa)) form a c region.

It belongs to the heat shock protein 90 family. As to quaternary structure, homodimer.

Its subcellular location is the cytoplasm. In terms of biological role, molecular chaperone. Has ATPase activity. This is Chaperone protein HtpG from Serratia proteamaculans (strain 568).